The following is a 492-amino-acid chain: Probable proline dehydrogenase, mitochondrial (492 aa).

It belongs to the proline oxidase family. The cofactor is FAD.

The protein localises to the mitochondrion. The enzyme catalyses L-proline + a quinone = (S)-1-pyrroline-5-carboxylate + a quinol + H(+). Converts proline to delta-1-pyrroline-5-carboxylate. The polypeptide is Probable proline dehydrogenase, mitochondrial (Schizosaccharomyces pombe (strain 972 / ATCC 24843) (Fission yeast)).